A 90-amino-acid chain; its full sequence is UPF0213 protein lwe0147 (90 aa).

Residues 5–83 (NEHFFYVLKC…SRKNKDSYLI (79 aa)) form the GIY-YIG domain.

The protein belongs to the UPF0213 family.

This is UPF0213 protein lwe0147 from Listeria welshimeri serovar 6b (strain ATCC 35897 / DSM 20650 / CCUG 15529 / CIP 8149 / NCTC 11857 / SLCC 5334 / V8).